A 511-amino-acid chain; its full sequence is Protein phosphatase 2C 7 (511 aa).

A signal peptide spans 1–19 (MEEISPAVALTLGLANTMC). Positions 188 to 501 (LWGTISICGG…DNISIIVIDL (314 aa)) constitute a PPM-type phosphatase domain. Residues aspartate 242, glycine 243, aspartate 432, and aspartate 492 each coordinate Mn(2+).

The protein belongs to the PP2C family. In terms of assembly, interacts with PYL13. The cofactor is Mg(2+). Mn(2+) is required as a cofactor. As to expression, expressed in seeds.

The catalysed reaction is O-phospho-L-seryl-[protein] + H2O = L-seryl-[protein] + phosphate. The enzyme catalyses O-phospho-L-threonyl-[protein] + H2O = L-threonyl-[protein] + phosphate. Its function is as follows. Key component and repressor of the abscisic acid (ABA) signaling pathway that regulates numerous ABA responses, such as stomatal closure, seed germination and inhibition of vegetative growth. The chain is Protein phosphatase 2C 7 (HAB2) from Arabidopsis thaliana (Mouse-ear cress).